A 345-amino-acid polypeptide reads, in one-letter code: MSRKKTIKDYENLAATRNHEVISVSNKETPSQGDITLLCKTCNKEFTTTTISYQNARKTGCPHCKATSASLYWTGRARTKTPEQAKKNAEIKEHINKTRKEKGKAFANIKNKEDLKEKLTNDLYLPNGEKNAYNDFILKRLNDPVTGKMMEKHHIIPLHAGGPDEKWNLISLTPEDHIEAHNLRYLVYNETGDKNTIKFRNKTPNVTDQISKAKALGNETRRAQGTGIYEPGMSSKAGKIGGSVKSVEKDLKQSTKMTSGVYDALYNGSRWKHTKTNTEIVIPPNTIVKMPQLVEKLIEALPPCEEKTRLAGAKLTTATSALARVIKGKNEGGRSSYFGWSICKE.

The protein resides in the plastid. Its subcellular location is the chloroplast. This is an uncharacterized protein from Chlamydomonas moewusii (Chlamydomonas eugametos).